The primary structure comprises 901 residues: HTH-type transcriptional regulator MalT (901 aa).

Position 39–46 (39–46 (SPAGYGKT)) interacts with ATP. Residues 829–894 (ELIRTSPLTQ…DAVQHAQQLL (66 aa)) form the HTH luxR-type domain. A DNA-binding region (H-T-H motif) is located at residues 853-872 (NEQIAGELEVAATTIKTHIR).

It belongs to the MalT family. As to quaternary structure, monomer in solution. Oligomerizes to an active state in the presence of the positive effectors ATP and maltotriose.

With respect to regulation, activated by ATP and maltotriose, which are both required for DNA binding. In terms of biological role, positively regulates the transcription of the maltose regulon whose gene products are responsible for uptake and catabolism of malto-oligosaccharides. Specifically binds to the promoter region of its target genes, recognizing a short DNA motif called the MalT box. The polypeptide is HTH-type transcriptional regulator MalT (Escherichia coli (strain K12 / MC4100 / BW2952)).